Reading from the N-terminus, the 220-residue chain is Deoxyribose-phosphate aldolase 1 (220 aa).

D89 acts as the Proton donor/acceptor in catalysis. K151 acts as the Schiff-base intermediate with acetaldehyde in catalysis. K180 serves as the catalytic Proton donor/acceptor.

This sequence belongs to the DeoC/FbaB aldolase family. DeoC type 1 subfamily.

The protein localises to the cytoplasm. The enzyme catalyses 2-deoxy-D-ribose 5-phosphate = D-glyceraldehyde 3-phosphate + acetaldehyde. The protein operates within carbohydrate degradation; 2-deoxy-D-ribose 1-phosphate degradation; D-glyceraldehyde 3-phosphate and acetaldehyde from 2-deoxy-alpha-D-ribose 1-phosphate: step 2/2. Its function is as follows. Catalyzes a reversible aldol reaction between acetaldehyde and D-glyceraldehyde 3-phosphate to generate 2-deoxy-D-ribose 5-phosphate. The protein is Deoxyribose-phosphate aldolase 1 of Mesoplasma florum (strain ATCC 33453 / NBRC 100688 / NCTC 11704 / L1) (Acholeplasma florum).